The primary structure comprises 283 residues: Phosphatidylglycerol--prolipoprotein diacylglyceryl transferase (283 aa).

4 consecutive transmembrane segments (helical) span residues 19–39 (IGPI…LIGV), 59–79 (LSIW…VLFQ), 90–110 (IIAI…GTLA), and 120–140 (VPFW…QAIG). Position 141 (arginine 141) interacts with a 1,2-diacyl-sn-glycero-3-phospho-(1'-sn-glycerol). Transmembrane regions (helical) follow at residues 181–201 (TFLY…TLFF), 212–232 (VGTL…WIEG), and 245–265 (IAQV…AWLY).

This sequence belongs to the Lgt family.

The protein localises to the cell inner membrane. It catalyses the reaction L-cysteinyl-[prolipoprotein] + a 1,2-diacyl-sn-glycero-3-phospho-(1'-sn-glycerol) = an S-1,2-diacyl-sn-glyceryl-L-cysteinyl-[prolipoprotein] + sn-glycerol 1-phosphate + H(+). The protein operates within protein modification; lipoprotein biosynthesis (diacylglyceryl transfer). In terms of biological role, catalyzes the transfer of the diacylglyceryl group from phosphatidylglycerol to the sulfhydryl group of the N-terminal cysteine of a prolipoprotein, the first step in the formation of mature lipoproteins. The protein is Phosphatidylglycerol--prolipoprotein diacylglyceryl transferase of Nostoc sp. (strain PCC 7120 / SAG 25.82 / UTEX 2576).